The primary structure comprises 1132 residues: Mis18-binding protein 1 (1132 aa).

A Glycyl lysine isopeptide (Lys-Gly) (interchain with G-Cter in SUMO2) cross-link involves residue Lys7. Ser9 is subject to Phosphoserine. Lys65 is covalently cross-linked (Glycyl lysine isopeptide (Lys-Gly) (interchain with G-Cter in SUMO2)). Ser110, Ser131, Ser135, Ser172, and Ser192 each carry phosphoserine. Residues 123 to 154 (LRDKQEQPSRNSSLLEPQKSGNNETFTPNRVE) are disordered. The segment covering 130 to 150 (PSRNSSLLEPQKSGNNETFTP) has biased composition (polar residues). Glycyl lysine isopeptide (Lys-Gly) (interchain with G-Cter in SUMO2) cross-links involve residues Lys211 and Lys262. Ser299 is modified (phosphoserine). Residues 306–332 (SERTTEGTSQQKVKEGNGKTVPGETGL) are disordered. At Ser365 the chain carries Phosphoserine. The SANTA domain occupies 383 to 469 (VQLQEWMIKS…MFGFPENWKE (87 aa)). Positions 482-518 (EKNREKTKQKQKTGRSVRDIRKSMKNDARENQTDTAQ) are disordered. A compositionally biased stretch (basic and acidic residues) spans 497–513 (SVRDIRKSMKNDARENQ). Glycyl lysine isopeptide (Lys-Gly) (interchain with G-Cter in SUMO2) cross-links involve residues Lys534, Lys612, Lys639, and Lys647. Thr653 is modified (phosphothreonine). Glycyl lysine isopeptide (Lys-Gly) (interchain with G-Cter in SUMO2) cross-links involve residues Lys727 and Lys742. Positions 765-798 (HQSSPDLSSEESETEKEIKRKAEVKKTKAGNTKE) are disordered. Phosphoserine is present on residues Ser772 and Ser773. Residues 779-790 (EKEIKRKAEVKK) show a composition bias toward basic and acidic residues. The residue at position 821 (Thr821) is a Phosphothreonine. Ser824 carries the post-translational modification Phosphoserine. A Glycyl lysine isopeptide (Lys-Gly) (interchain with G-Cter in SUMO2) cross-link involves residue Lys840. Ser860 carries the phosphoserine modification. The SANT domain occupies 875 to 930 (IQDKEWNEKELQKLHCAFASLPKHKPGFWSEVAAAVGSRSPEECQRKYMENPRGKG). Lys899 participates in a covalent cross-link: Glycyl lysine isopeptide (Lys-Gly) (interchain with G-Cter in SUMO2). Residues 923–957 (MENPRGKGSQKHVTKKKPANSKGQNGKRGDADQKQ) are disordered. Over residues 930-941 (GSQKHVTKKKPA) the composition is skewed to basic residues. Residues Lys956, Lys964, and Lys983 each participate in a glycyl lysine isopeptide (Lys-Gly) (interchain with G-Cter in SUMO2) cross-link. Ser1008 is subject to Phosphoserine. A Glycyl lysine isopeptide (Lys-Gly) (interchain with G-Cter in SUMO2) cross-link involves residue Lys1079. Ser1086 bears the Phosphoserine mark. Thr1087 and Thr1089 each carry phosphothreonine. A phosphoserine mark is found at Ser1104 and Ser1116.

Interacts with SP1. Interacts with MIS18A. Identified in a complex containing MIS18A, OIP5/MIS18B, MIS18BP1, RBBP7 and RBBP4. Interacts with KAT7/HBO1. Interacts (via N-terminus) with FLNA (via N-terminus).

The protein resides in the nucleus. It is found in the chromosome. It localises to the centromere. Required for recruitment of CENPA to centromeres and normal chromosome segregation during mitosis. This chain is Mis18-binding protein 1 (MIS18BP1), found in Homo sapiens (Human).